A 1031-amino-acid polypeptide reads, in one-letter code: Error-prone DNA polymerase (1031 aa).

It belongs to the DNA polymerase type-C family. DnaE2 subfamily.

It localises to the cytoplasm. The enzyme catalyses DNA(n) + a 2'-deoxyribonucleoside 5'-triphosphate = DNA(n+1) + diphosphate. Its function is as follows. DNA polymerase involved in damage-induced mutagenesis and translesion synthesis (TLS). It is not the major replicative DNA polymerase. This chain is Error-prone DNA polymerase, found in Pseudomonas aeruginosa (strain ATCC 15692 / DSM 22644 / CIP 104116 / JCM 14847 / LMG 12228 / 1C / PRS 101 / PAO1).